A 939-amino-acid polypeptide reads, in one-letter code: Translation initiation factor IF-2 (939 aa).

2 disordered regions span residues 51–81 (LGTKESGQDTGQATNEAAAAHRPTTVIGGKK) and 137–353 (VTNK…EMKA). A compositionally biased stretch (basic and acidic residues) spans 181-210 (NEKKAGAPEIKRAEHTETVEKSKTAVDSKK). Positions 259-277 (PVNRSPRPSTPSPNRSAGG) are enriched in low complexity. Residues 300–312 (RRDEKPAERDSRP) show a composition bias toward basic and acidic residues. One can recognise a tr-type G domain in the interval 437–606 (GRCPVVTVMG…QLAAEMLELK (170 aa)). The G1 stretch occupies residues 446-453 (GHVDHGKT). Position 446-453 (446-453 (GHVDHGKT)) interacts with GTP. The G2 stretch occupies residues 471–475 (GITQH). The interval 492–495 (DTPG) is G3. GTP contacts are provided by residues 492-496 (DTPGH) and 546-549 (NKID). The segment at 546 to 549 (NKID) is G4. Residues 582–584 (SAK) form a G5 region.

Belongs to the TRAFAC class translation factor GTPase superfamily. Classic translation factor GTPase family. IF-2 subfamily.

The protein localises to the cytoplasm. In terms of biological role, one of the essential components for the initiation of protein synthesis. Protects formylmethionyl-tRNA from spontaneous hydrolysis and promotes its binding to the 30S ribosomal subunits. Also involved in the hydrolysis of GTP during the formation of the 70S ribosomal complex. The polypeptide is Translation initiation factor IF-2 (Desulfotalea psychrophila (strain LSv54 / DSM 12343)).